Consider the following 428-residue polypeptide: Tyrosine--tRNA ligase (428 aa).

An L-tyrosine-binding site is contributed by Y36. Positions 41-50 (PTAPSLHAGH) match the 'HIGH' region motif. Y171 and Q175 together coordinate L-tyrosine. The 'KMSKS' region motif lies at 231 to 235 (KFGKS). Residue K234 participates in ATP binding. An S4 RNA-binding domain is found at 359–416 (DSIVDLLVETGLAASKGAARRNVAEGGVYVNNIRIESDEWIPQHSDFLHERWLVLRRG).

Belongs to the class-I aminoacyl-tRNA synthetase family. TyrS type 1 subfamily. In terms of assembly, homodimer.

The protein localises to the cytoplasm. It carries out the reaction tRNA(Tyr) + L-tyrosine + ATP = L-tyrosyl-tRNA(Tyr) + AMP + diphosphate + H(+). Catalyzes the attachment of tyrosine to tRNA(Tyr) in a two-step reaction: tyrosine is first activated by ATP to form Tyr-AMP and then transferred to the acceptor end of tRNA(Tyr). The chain is Tyrosine--tRNA ligase from Mycolicibacterium fortuitum (Mycobacterium fortuitum).